The primary structure comprises 360 residues: Aminomethyltransferase (360 aa).

This sequence belongs to the GcvT family. In terms of assembly, the glycine cleavage system is composed of four proteins: P, T, L and H.

The catalysed reaction is N(6)-[(R)-S(8)-aminomethyldihydrolipoyl]-L-lysyl-[protein] + (6S)-5,6,7,8-tetrahydrofolate = N(6)-[(R)-dihydrolipoyl]-L-lysyl-[protein] + (6R)-5,10-methylene-5,6,7,8-tetrahydrofolate + NH4(+). Functionally, the glycine cleavage system catalyzes the degradation of glycine. The chain is Aminomethyltransferase from Flavobacterium psychrophilum (strain ATCC 49511 / DSM 21280 / CIP 103535 / JIP02/86).